The following is a 714-amino-acid chain: Fatty acid oxidation complex subunit alpha (714 aa).

The interval 1–190 (MEMASAFTLN…KLGLVDDVVP (190 aa)) is enoyl-CoA hydratase. The 3-hydroxyacyl-CoA dehydrogenase stretch occupies residues 306–714 (APLNSVGILG…FWKTTATDLQ (409 aa)).

In the N-terminal section; belongs to the enoyl-CoA hydratase/isomerase family. The protein in the central section; belongs to the 3-hydroxyacyl-CoA dehydrogenase family. Heterotetramer of two alpha chains (FadJ) and two beta chains (FadI).

The protein resides in the cytoplasm. It catalyses the reaction a (3S)-3-hydroxyacyl-CoA = a (2E)-enoyl-CoA + H2O. The enzyme catalyses a 4-saturated-(3S)-3-hydroxyacyl-CoA = a (3E)-enoyl-CoA + H2O. The catalysed reaction is a (3S)-3-hydroxyacyl-CoA + NAD(+) = a 3-oxoacyl-CoA + NADH + H(+). It carries out the reaction (3S)-3-hydroxybutanoyl-CoA = (3R)-3-hydroxybutanoyl-CoA. It participates in lipid metabolism; fatty acid beta-oxidation. Functionally, catalyzes the formation of a hydroxyacyl-CoA by addition of water on enoyl-CoA. Also exhibits 3-hydroxyacyl-CoA epimerase and 3-hydroxyacyl-CoA dehydrogenase activities. The chain is Fatty acid oxidation complex subunit alpha from Escherichia coli O127:H6 (strain E2348/69 / EPEC).